An 851-amino-acid chain; its full sequence is Beta-galactosidase 3 (851 aa).

A signal peptide spans 1 to 29; sequence MAGASSYFSLRRLLLLLLPLVPLLGATTA. Asn35 carries an N-linked (GlcNAc...) asparagine glycan. Glu194 acts as the Proton donor in catalysis. The active-site Nucleophile is Glu263. 4 N-linked (GlcNAc...) asparagine glycosylation sites follow: Asn361, Asn475, Asn528, and Asn533. Residues 765 to 851 form the SUEL-type lectin domain; sequence GRDAAKVQLS…KTLAIEADCS (87 aa).

The protein belongs to the glycosyl hydrolase 35 family.

It is found in the secreted. The protein resides in the extracellular space. Its subcellular location is the apoplast. The catalysed reaction is Hydrolysis of terminal non-reducing beta-D-galactose residues in beta-D-galactosides.. This Oryza sativa subsp. japonica (Rice) protein is Beta-galactosidase 3.